We begin with the raw amino-acid sequence, 361 residues long: Peptide chain release factor 1 (361 aa).

Glutamine 235 is subject to N5-methylglutamine.

This sequence belongs to the prokaryotic/mitochondrial release factor family. In terms of processing, methylated by PrmC. Methylation increases the termination efficiency of RF1.

It localises to the cytoplasm. Peptide chain release factor 1 directs the termination of translation in response to the peptide chain termination codons UAG and UAA. The polypeptide is Peptide chain release factor 1 (Chlamydia abortus (strain DSM 27085 / S26/3) (Chlamydophila abortus)).